We begin with the raw amino-acid sequence, 321 residues long: Lipoyl synthase (321 aa).

[4Fe-4S] cluster contacts are provided by C68, C73, C79, C94, C98, C101, and S308. Residues 80 to 297 (FNHGTATFMI…REFAESIGFT (218 aa)) form the Radical SAM core domain.

It belongs to the radical SAM superfamily. Lipoyl synthase family. [4Fe-4S] cluster serves as cofactor.

The protein resides in the cytoplasm. It catalyses the reaction [[Fe-S] cluster scaffold protein carrying a second [4Fe-4S](2+) cluster] + N(6)-octanoyl-L-lysyl-[protein] + 2 oxidized [2Fe-2S]-[ferredoxin] + 2 S-adenosyl-L-methionine + 4 H(+) = [[Fe-S] cluster scaffold protein] + N(6)-[(R)-dihydrolipoyl]-L-lysyl-[protein] + 4 Fe(3+) + 2 hydrogen sulfide + 2 5'-deoxyadenosine + 2 L-methionine + 2 reduced [2Fe-2S]-[ferredoxin]. Its pathway is protein modification; protein lipoylation via endogenous pathway; protein N(6)-(lipoyl)lysine from octanoyl-[acyl-carrier-protein]: step 2/2. In terms of biological role, catalyzes the radical-mediated insertion of two sulfur atoms into the C-6 and C-8 positions of the octanoyl moiety bound to the lipoyl domains of lipoate-dependent enzymes, thereby converting the octanoylated domains into lipoylated derivatives. This Shewanella sediminis (strain HAW-EB3) protein is Lipoyl synthase.